Reading from the N-terminus, the 168-residue chain is Crossover junction endodeoxyribonuclease RuvC (168 aa).

Residues D7, E64, and D136 contribute to the active site. D7, E64, and D136 together coordinate Mg(2+).

Belongs to the RuvC family. In terms of assembly, homodimer which binds Holliday junction (HJ) DNA. The HJ becomes 2-fold symmetrical on binding to RuvC with unstacked arms; it has a different conformation from HJ DNA in complex with RuvA. In the full resolvosome a probable DNA-RuvA(4)-RuvB(12)-RuvC(2) complex forms which resolves the HJ. Requires Mg(2+) as cofactor.

It localises to the cytoplasm. It carries out the reaction Endonucleolytic cleavage at a junction such as a reciprocal single-stranded crossover between two homologous DNA duplexes (Holliday junction).. Functionally, the RuvA-RuvB-RuvC complex processes Holliday junction (HJ) DNA during genetic recombination and DNA repair. Endonuclease that resolves HJ intermediates. Cleaves cruciform DNA by making single-stranded nicks across the HJ at symmetrical positions within the homologous arms, yielding a 5'-phosphate and a 3'-hydroxyl group; requires a central core of homology in the junction. The consensus cleavage sequence is 5'-(A/T)TT(C/G)-3'. Cleavage occurs on the 3'-side of the TT dinucleotide at the point of strand exchange. HJ branch migration catalyzed by RuvA-RuvB allows RuvC to scan DNA until it finds its consensus sequence, where it cleaves and resolves the cruciform DNA. The chain is Crossover junction endodeoxyribonuclease RuvC from Polynucleobacter necessarius subsp. necessarius (strain STIR1).